We begin with the raw amino-acid sequence, 989 residues long: Vacuolar membrane protease (989 aa).

A disordered region spans residues 1–25; sequence MDRQSLRTTLRAMDASNENGSAKGA. Residues 1 to 41 are Cytoplasmic-facing; the sequence is MDRQSLRTTLRAMDASNENGSAKGAKKTTIGSFVRWTFGFN. Residues 42–62 traverse the membrane as a helical segment; it reads SVPLTTLVTITTVLLGLLVYV. Residues 63–383 are Vacuolar-facing; that stretch reads STSVNPPDVT…YLFIILPLQY (321 aa). His181 and Asp193 together coordinate Zn(2+). Glu227 (proton acceptor) is an active-site residue. A Zn(2+)-binding site is contributed by Glu228. Asn245 carries N-linked (GlcNAc...) asparagine glycosylation. 2 residues coordinate Zn(2+): Glu253 and His325. A helical membrane pass occupies residues 384 to 404; that stretch reads IFVISCLTLAVGPIFVGFLFL. The Cytoplasmic portion of the chain corresponds to 405–426; sequence LVLRKQINAGTSETILGGWLRS. A helical membrane pass occupies residues 427-447; that stretch reads IVSVLVSVVATYFVVETLHLG. The Vacuolar portion of the chain corresponds to 448–460; that stretch reads NELYVVRSFYTPL. The chain crosses the membrane as a helical span at residues 461–481; sequence FAGLGTFIFVNYVLLGFFHFV. Residues 482 to 488 lie on the Cytoplasmic side of the membrane; that stretch reads RPVCDQK. A helical transmembrane segment spans residues 489 to 509; sequence LIILLELSVVLWVLLLLSVIH. The Vacuolar segment spans residues 510–520; it reads EATHKATGEYH. A helical membrane pass occupies residues 521-541; the sequence is FLILYIVVATASILGLFGHLV. Residues 542–611 lie on the Cytoplasmic side of the membrane; that stretch reads TSTETSTFVE…IAVSMGYDWS (70 aa). Residues 548–576 are disordered; that stretch reads TFVEGPEDEEDTVDASEATETSPLLPEAS. Acidic residues predominate over residues 552 to 561; that stretch reads GPEDEEDTVD. A helical transmembrane segment spans residues 612-632; it reads IQFLLVVPITFFVTFGLAASL. At 633–648 the chain is on the vacuolar side; the sequence is LDGLHQTPLESEKSAD. Residues 649 to 669 form a helical membrane-spanning segment; that stretch reads FVYTTITAMSVLVGITFLPFV. At 670-673 the chain is on the cytoplasmic side; the sequence is HKLQ. Residues 674–694 form a helical membrane-spanning segment; sequence VFVPIVVVGVAVTASFVHILS. Topologically, residues 695-989 are vacuolar; sequence PPFSSNAPAK…LVEVSKYVEL (295 aa). N-linked (GlcNAc...) asparagine glycans are attached at residues Asn745, Asn793, and Asn822.

This sequence belongs to the peptidase M28 family. Zn(2+) is required as a cofactor.

The protein localises to the vacuole membrane. In terms of biological role, may be involved in vacuolar sorting and osmoregulation. The polypeptide is Vacuolar membrane protease (Yarrowia lipolytica (strain CLIB 122 / E 150) (Yeast)).